A 490-amino-acid chain; its full sequence is Betaine aldehyde dehydrogenase (490 aa).

K(+)-binding residues include Ser26, Ile27, and Asp93. 150–152 contributes to the NAD(+) binding site; the sequence is GAW. The active-site Charge relay system is the Lys162. NAD(+) contacts are provided by residues 176–179 and 230–233; these read KPSE and GVET. A K(+)-binding site is contributed by Leu246. Catalysis depends on Glu252, which acts as the Proton acceptor. Positions 254, 286, and 387 each coordinate NAD(+). Cys286 acts as the Nucleophile in catalysis. Residue Cys286 is modified to Cysteine sulfenic acid (-SOH). K(+) is bound by residues Lys457 and Gly460. The active-site Charge relay system is Glu464.

It belongs to the aldehyde dehydrogenase family. As to quaternary structure, dimer of dimers. K(+) is required as a cofactor.

The enzyme catalyses betaine aldehyde + NAD(+) + H2O = glycine betaine + NADH + 2 H(+). It functions in the pathway amine and polyamine biosynthesis; betaine biosynthesis via choline pathway; betaine from betaine aldehyde: step 1/1. Its function is as follows. Involved in the biosynthesis of the osmoprotectant glycine betaine. Catalyzes the irreversible oxidation of betaine aldehyde to the corresponding acid. The sequence is that of Betaine aldehyde dehydrogenase from Acinetobacter baumannii (strain SDF).